A 265-amino-acid polypeptide reads, in one-letter code: Indole-3-glycerol phosphate synthase (265 aa).

Belongs to the TrpC family.

The enzyme catalyses 1-(2-carboxyphenylamino)-1-deoxy-D-ribulose 5-phosphate + H(+) = (1S,2R)-1-C-(indol-3-yl)glycerol 3-phosphate + CO2 + H2O. It participates in amino-acid biosynthesis; L-tryptophan biosynthesis; L-tryptophan from chorismate: step 4/5. The sequence is that of Indole-3-glycerol phosphate synthase from Xanthomonas euvesicatoria pv. vesicatoria (strain 85-10) (Xanthomonas campestris pv. vesicatoria).